Here is a 418-residue protein sequence, read N- to C-terminus: Beta-arrestin-1 (418 aa).

Residues Met-1–Ser-163 form an interaction with SRC region. Positions Pro-45 to Ser-86 are interaction with CHRM2. Tyr-47 bears the Phosphotyrosine mark. 1D-myo-inositol hexakisphosphate contacts are provided by Lys-250, Met-255, Lys-324, and Lys-326. The tract at residues Ile-318–Arg-418 is interaction with TRAF6. Disordered regions lie at residues His-353 to Thr-374 and Lys-397 to Arg-418. Residues Lys-355–Pro-366 are compositionally biased toward basic and acidic residues. Ser-412 carries the phosphoserine modification. A Phosphoserine; by GRK5 modification is found at Ser-412.

This sequence belongs to the arrestin family. Monomer. Homodimer. Homooligomer; the self-association is mediated by InsP6-binding. Heterooligomer with ARRB2; the association is mediated by InsP6-binding. Interacts with ADRB2 (phosphorylated). Interacts with CHRM2 (phosphorylated). Interacts with LHCGR. Interacts with CYTH2 and CASR. Interacts with AP2B1 (dephosphorylated at 'Tyr-737'); phosphorylation of AP2B1 at 'Tyr-737' disrupts the interaction. Interacts (dephosphorylated at Ser-412) with CLTC. Interacts with CCR2 and GRK2. Interacts with CRR5. Interacts with PTAFR (phosphorylated on serine residues). Interacts with CLTC and MAP2K3. Interacts with CREB1. Interacts with TRAF6. Interacts with IGF1R and MDM2. Interacts with C5AR1. Interacts with PDE4D. Interacts with SRC (via the SH3 domain and the protein kinase domain); the interaction is independent of the phosphorylation state of SRC C-terminus. Interacts with TACR1. Interacts with RAF1. Interacts with CHUK, IKBKB and MAP3K14. Interacts with DVL1; the interaction is enhanced by phosphorylation of DVL1. Interacts with DVL2; the interaction is enhanced by phosphorylation of DVL2. Interacts with IGF1R. Associates with MAP kinase p38. Part of a MAPK signaling complex consisting of TACR1, ARRB1, SRC, MAPK1 (activated) and MAPK3 (activated). Part of a MAPK signaling complex consisting of F2RL1, ARRB1, RAF1, MAPK1 (activated) and MAPK3 (activated). Interacts with GPR143. Interacts with MAP2K4/MKK4. Interacts with HCK and CXCR1 (phosphorylated). Interacts with ACKR3 and ACKR4. Interacts with ARRDC1; the interaction is direct. Interacts with GPR61, GPR62 and GPR135. Post-translationally, constitutively phosphorylated at Ser-412 in the cytoplasm. At the plasma membrane, is rapidly dephosphorylated, a process that is required for clathrin binding and beta-2 adrenergic receptor/ADRB2 endocytosis but not for ADRB2 binding and desensitization. Once internalized, is rephosphorylated. The ubiquitination status appears to regulate the formation and trafficking of beta-arrestin-GPCR complexes and signaling. Ubiquitination appears to occur GPCR-specific. Ubiquitinated by MDM2; the ubiquitination is required for rapid internalization of ADRB2. Deubiquitinated by USP33; the deubiquitination leads to a dissociation of the beta-arrestin-GPCR complex. Stimulation of a class A GPCR, such as ADRB2, induces transient ubiquitination and subsequently promotes association with USP33. Predominantly localized in neuronal tissues and in the spleen.

It localises to the cytoplasm. Its subcellular location is the nucleus. It is found in the cell membrane. The protein resides in the membrane. The protein localises to the clathrin-coated pit. It localises to the cell projection. Its subcellular location is the pseudopodium. It is found in the cytoplasmic vesicle. Its function is as follows. Functions in regulating agonist-mediated G-protein coupled receptor (GPCR) signaling by mediating both receptor desensitization and resensitization processes. During homologous desensitization, beta-arrestins bind to the GPRK-phosphorylated receptor and sterically preclude its coupling to the cognate G-protein; the binding appears to require additional receptor determinants exposed only in the active receptor conformation. The beta-arrestins target many receptors for internalization by acting as endocytic adapters (CLASPs, clathrin-associated sorting proteins) and recruiting the GPRCs to the adapter protein 2 complex 2 (AP-2) in clathrin-coated pits (CCPs). However, the extent of beta-arrestin involvement appears to vary significantly depending on the receptor, agonist and cell type. Internalized arrestin-receptor complexes traffic to intracellular endosomes, where they remain uncoupled from G-proteins. Two different modes of arrestin-mediated internalization occur. Class A receptors, like ADRB2, OPRM1, ENDRA, D1AR and ADRA1B dissociate from beta-arrestin at or near the plasma membrane and undergo rapid recycling. Class B receptors, like AVPR2, AGTR1, NTSR1, TRHR and TACR1 internalize as a complex with arrestin and traffic with it to endosomal vesicles, presumably as desensitized receptors, for extended periods of time. Receptor resensitization then requires that receptor-bound arrestin is removed so that the receptor can be dephosphorylated and returned to the plasma membrane. Involved in internalization of P2RY4 and UTP-stimulated internalization of P2RY2. Involved in phosphorylation-dependent internalization of OPRD1 ands subsequent recycling. Involved in the degradation of cAMP by recruiting cAMP phosphodiesterases to ligand-activated receptors. Beta-arrestins function as multivalent adapter proteins that can switch the GPCR from a G-protein signaling mode that transmits short-lived signals from the plasma membrane via small molecule second messengers and ion channels to a beta-arrestin signaling mode that transmits a distinct set of signals that are initiated as the receptor internalizes and transits the intracellular compartment. Acts as a signaling scaffold for MAPK pathways such as MAPK1/3 (ERK1/2). ERK1/2 activated by the beta-arrestin scaffold is largely excluded from the nucleus and confined to cytoplasmic locations such as endocytic vesicles, also called beta-arrestin signalosomes. Recruits c-Src/SRC to ADRB2 resulting in ERK activation. GPCRs for which the beta-arrestin-mediated signaling relies on both ARRB1 and ARRB2 (codependent regulation) include ADRB2, F2RL1 and PTH1R. For some GPCRs the beta-arrestin-mediated signaling relies on either ARRB1 or ARRB2 and is inhibited by the other respective beta-arrestin form (reciprocal regulation). Inhibits ERK1/2 signaling in AGTR1- and AVPR2-mediated activation (reciprocal regulation). Is required for SP-stimulated endocytosis of NK1R and recruits c-Src/SRC to internalized NK1R resulting in ERK1/2 activation, which is required for the antiapoptotic effects of SP. Is involved in proteinase-activated F2RL1-mediated ERK activity. Acts as a signaling scaffold for the AKT1 pathway. Is involved in alpha-thrombin-stimulated AKT1 signaling. Is involved in IGF1-stimulated AKT1 signaling leading to increased protection from apoptosis. Involved in activation of the p38 MAPK signaling pathway and in actin bundle formation. Involved in F2RL1-mediated cytoskeletal rearrangement and chemotaxis. Involved in AGTR1-mediated stress fiber formation by acting together with GNAQ to activate RHOA. Appears to function as signaling scaffold involved in regulation of MIP-1-beta-stimulated CCR5-dependent chemotaxis. Involved in attenuation of NF-kappa-B-dependent transcription in response to GPCR or cytokine stimulation by interacting with and stabilizing CHUK. May serve as nuclear messenger for GPCRs. Involved in OPRD1-stimulated transcriptional regulation by translocating to CDKN1B and FOS promoter regions and recruiting EP300 resulting in acetylation of histone H4. Involved in regulation of LEF1 transcriptional activity via interaction with DVL1 and/or DVL2 Also involved in regulation of receptors other than GPCRs. Involved in Toll-like receptor and IL-1 receptor signaling through the interaction with TRAF6 which prevents TRAF6 autoubiquitination and oligomerization required for activation of NF-kappa-B and JUN. Binds phosphoinositides. Binds inositolhexakisphosphate (InsP6). Involved in IL8-mediated granule release in neutrophils. Required for atypical chemokine receptor ACKR2-induced RAC1-LIMK1-PAK1-dependent phosphorylation of cofilin (CFL1) and for the up-regulation of ACKR2 from endosomal compartment to cell membrane, increasing its efficiency in chemokine uptake and degradation. Involved in the internalization of the atypical chemokine receptor ACKR3. Negatively regulates the NOTCH signaling pathway by mediating the ubiquitination and degradation of NOTCH1 by ITCH. Participates in the recruitment of the ubiquitin-protein ligase to the receptor. The protein is Beta-arrestin-1 of Rattus norvegicus (Rat).